The sequence spans 405 residues: Serine/threonine transporter SstT (405 aa).

Transmembrane regions (helical) follow at residues 13–33, 43–63, 82–102, 141–161, 185–205, 217–237, 298–318, and 339–359; these read GGSLVLQIFVGIIAGVALAGF, FLGDLFVGALKAIAPVLVFVL, IILLYLVGTFAAALTAVLMSF, ALINANYIGLLAWGVGLGIAL, FVICLAPIGIFGLVAATIAQT, LGVLLGAMAVIAFVVNPLIVF, MAGAAITITVLTLAAVHTLGI, and ASGVAGGSLLLIPLACSLFGI.

Belongs to the dicarboxylate/amino acid:cation symporter (DAACS) (TC 2.A.23) family.

It is found in the cell inner membrane. It carries out the reaction L-serine(in) + Na(+)(in) = L-serine(out) + Na(+)(out). The catalysed reaction is L-threonine(in) + Na(+)(in) = L-threonine(out) + Na(+)(out). Involved in the import of serine and threonine into the cell, with the concomitant import of sodium (symport system). In Shewanella amazonensis (strain ATCC BAA-1098 / SB2B), this protein is Serine/threonine transporter SstT.